A 116-amino-acid chain; its full sequence is Large ribosomal subunit protein bL17 (116 aa).

Belongs to the bacterial ribosomal protein bL17 family. Part of the 50S ribosomal subunit. Contacts protein L32.

This is Large ribosomal subunit protein bL17 from Prochlorococcus marinus (strain MIT 9303).